Reading from the N-terminus, the 72-residue chain is Crustacean hyperglycemic hormone (72 aa).

At Gln1 the chain carries Pyrrolidone carboxylic acid; partial. Disulfide bonds link Cys7–Cys43, Cys23–Cys39, and Cys26–Cys52. At Val72 the chain carries Valine amide.

Belongs to the arthropod CHH/MIH/GIH/VIH hormone family. In terms of processing, the N-terminus forms pyrrolidone carboxylic acid in isoform CHH-II and is free in isoform CHH-I. As to expression, produced by the medulla terminalis X-organ in the eyestalks and transported to the sinus gland where they are stored and released.

Its subcellular location is the secreted. Its function is as follows. Hormone found in the sinus gland of isopods and decapods which controls the blood sugar level. Has a secretagogue action over the amylase released from the midgut gland. May act as a stress hormone and may be involved in the control of molting and reproduction. The protein is Crustacean hyperglycemic hormone of Cancer pagurus (Rock crab).